A 416-amino-acid polypeptide reads, in one-letter code: Multifunctional CCA protein (416 aa).

The ATP site is built by glycine 8 and arginine 11. CTP is bound by residues glycine 8 and arginine 11. Glutamate 21 and aspartate 23 together coordinate Mg(2+). ATP-binding residues include arginine 91, arginine 137, and arginine 140. Residues arginine 91, arginine 137, and arginine 140 each coordinate CTP. The 102-residue stretch at 228-329 (TGIHTLMVLK…LKLFDAVDAW (102 aa)) folds into the HD domain.

This sequence belongs to the tRNA nucleotidyltransferase/poly(A) polymerase family. Bacterial CCA-adding enzyme type 1 subfamily. Monomer. Can also form homodimers and oligomers. Mg(2+) is required as a cofactor. Ni(2+) serves as cofactor.

It catalyses the reaction a tRNA precursor + 2 CTP + ATP = a tRNA with a 3' CCA end + 3 diphosphate. The catalysed reaction is a tRNA with a 3' CCA end + 2 CTP + ATP = a tRNA with a 3' CCACCA end + 3 diphosphate. In terms of biological role, catalyzes the addition and repair of the essential 3'-terminal CCA sequence in tRNAs without using a nucleic acid template. Adds these three nucleotides in the order of C, C, and A to the tRNA nucleotide-73, using CTP and ATP as substrates and producing inorganic pyrophosphate. tRNA 3'-terminal CCA addition is required both for tRNA processing and repair. Also involved in tRNA surveillance by mediating tandem CCA addition to generate a CCACCA at the 3' terminus of unstable tRNAs. While stable tRNAs receive only 3'-terminal CCA, unstable tRNAs are marked with CCACCA and rapidly degraded. The sequence is that of Multifunctional CCA protein from Photorhabdus laumondii subsp. laumondii (strain DSM 15139 / CIP 105565 / TT01) (Photorhabdus luminescens subsp. laumondii).